Reading from the N-terminus, the 321-residue chain is Ribose-phosphate pyrophosphokinase C (321 aa).

D132 and D147 together coordinate Mg(2+). Positions 214-229 are binding of phosphoribosylpyrophosphate; that stretch reads SGKVAIIIGSIADTCE.

This sequence belongs to the ribose-phosphate pyrophosphokinase family. It depends on Mg(2+) as a cofactor.

The protein localises to the cytoplasm. The catalysed reaction is D-ribose 5-phosphate + ATP = 5-phospho-alpha-D-ribose 1-diphosphate + AMP + H(+). Its pathway is metabolic intermediate biosynthesis; 5-phospho-alpha-D-ribose 1-diphosphate biosynthesis; 5-phospho-alpha-D-ribose 1-diphosphate from D-ribose 5-phosphate (route I): step 1/1. The sequence is that of Ribose-phosphate pyrophosphokinase C (prsC) from Dictyostelium discoideum (Social amoeba).